Reading from the N-terminus, the 161-residue chain is MSVTLHTDVGDIKIEVFCERTPKTCENFLALCASNYYNGCIFHRNIKGFMVQTGDPTGTGRGGNSIWGKKFEDEYSEYLKHNVRGVVSMANNGPNTNGSQFFITYGKQPHLDMKYTVFGKVIDGLETLDELEKLPVNEKTYRPLNDVHIKDITIHANPFAQ.

Serine 2 carries the N-acetylserine modification. A PPIase cyclophilin-type domain is found at 2–154 (SVTLHTDVGD…NDVHIKDITI (153 aa)). Residue arginine 61 is modified to Omega-N-methylarginine.

It belongs to the cyclophilin-type PPIase family. PPIL3 subfamily. Identified in the spliceosome C complex. Ubiquitous. Detected at low levels.

It carries out the reaction [protein]-peptidylproline (omega=180) = [protein]-peptidylproline (omega=0). PPIases accelerate the folding of proteins. It catalyzes the cis-trans isomerization of proline imidic peptide bonds in oligopeptides. May be involved in pre-mRNA splicing. This is Peptidyl-prolyl cis-trans isomerase-like 3 (PPIL3) from Homo sapiens (Human).